We begin with the raw amino-acid sequence, 434 residues long: Glutamate-1-semialdehyde 2,1-aminomutase 1 (434 aa).

K270 is subject to N6-(pyridoxal phosphate)lysine.

This sequence belongs to the class-III pyridoxal-phosphate-dependent aminotransferase family. HemL subfamily. In terms of assembly, homodimer. Pyridoxal 5'-phosphate serves as cofactor.

It is found in the cytoplasm. It carries out the reaction (S)-4-amino-5-oxopentanoate = 5-aminolevulinate. It functions in the pathway porphyrin-containing compound metabolism; protoporphyrin-IX biosynthesis; 5-aminolevulinate from L-glutamyl-tRNA(Glu): step 2/2. In Bacillus thuringiensis (strain Al Hakam), this protein is Glutamate-1-semialdehyde 2,1-aminomutase 1.